A 686-amino-acid chain; its full sequence is DNA ligase (686 aa).

Residues aspartate 45–aspartate 49, serine 94–leucine 95, and glutamate 127 contribute to the NAD(+) site. Lysine 129 acts as the N6-AMP-lysine intermediate in catalysis. Positions 150, 187, 302, and 326 each coordinate NAD(+). Positions 420, 423, 438, and 444 each coordinate Zn(2+). Residues leucine 605–serine 686 enclose the BRCT domain.

This sequence belongs to the NAD-dependent DNA ligase family. LigA subfamily. Requires Mg(2+) as cofactor. It depends on Mn(2+) as a cofactor.

It catalyses the reaction NAD(+) + (deoxyribonucleotide)n-3'-hydroxyl + 5'-phospho-(deoxyribonucleotide)m = (deoxyribonucleotide)n+m + AMP + beta-nicotinamide D-nucleotide.. Functionally, DNA ligase that catalyzes the formation of phosphodiester linkages between 5'-phosphoryl and 3'-hydroxyl groups in double-stranded DNA using NAD as a coenzyme and as the energy source for the reaction. It is essential for DNA replication and repair of damaged DNA. This chain is DNA ligase, found in Psychrobacter sp. (strain PRwf-1).